Reading from the N-terminus, the 120-residue chain is Large ribosomal subunit protein uL18 (120 aa).

This sequence belongs to the universal ribosomal protein uL18 family. As to quaternary structure, part of the 50S ribosomal subunit; part of the 5S rRNA/L5/L18/L25 subcomplex. Contacts the 5S and 23S rRNAs.

This is one of the proteins that bind and probably mediate the attachment of the 5S RNA into the large ribosomal subunit, where it forms part of the central protuberance. The sequence is that of Large ribosomal subunit protein uL18 from Methylorubrum extorquens (strain CM4 / NCIMB 13688) (Methylobacterium extorquens).